The primary structure comprises 714 residues: Penicillin-binding protein 1F (714 aa).

Residues 1–12 are Cytoplasmic-facing; it reads MFKIKKKKLFIP. Residues 13-33 form a helical; Signal-anchor for type II membrane protein membrane-spanning segment; sequence IIILVLTAFLALIGYISIIFL. Residues 34 to 714 lie on the Extracellular side of the membrane; it reads GHYVIDEKKL…DYVQPKLFSS (681 aa). The segment at 49-217 is transglycosylase; sequence SKIVDQNGDE…STYSPILHPD (169 aa). Catalysis depends on E87, which acts as the Proton donor; for transglycosylase activity. Residues 297–592 form a transpeptidase region; that stretch reads SKLQKTAYQV…SSYPTRLFKD (296 aa). The active-site Acyl-ester intermediate; for transpeptidase activity is the S359.

In the N-terminal section; belongs to the glycosyltransferase 51 family. The protein in the C-terminal section; belongs to the transpeptidase family.

The protein localises to the cell membrane. The catalysed reaction is [GlcNAc-(1-&gt;4)-Mur2Ac(oyl-L-Ala-gamma-D-Glu-L-Lys-D-Ala-D-Ala)](n)-di-trans,octa-cis-undecaprenyl diphosphate + beta-D-GlcNAc-(1-&gt;4)-Mur2Ac(oyl-L-Ala-gamma-D-Glu-L-Lys-D-Ala-D-Ala)-di-trans,octa-cis-undecaprenyl diphosphate = [GlcNAc-(1-&gt;4)-Mur2Ac(oyl-L-Ala-gamma-D-Glu-L-Lys-D-Ala-D-Ala)](n+1)-di-trans,octa-cis-undecaprenyl diphosphate + di-trans,octa-cis-undecaprenyl diphosphate + H(+). The enzyme catalyses Preferential cleavage: (Ac)2-L-Lys-D-Ala-|-D-Ala. Also transpeptidation of peptidyl-alanyl moieties that are N-acyl substituents of D-alanine.. It functions in the pathway cell wall biogenesis; peptidoglycan biosynthesis. Cell wall formation. May be involved in outgrowth of the germinated spore or it could function in the synthesis of the germ cell wall. In Bacillus subtilis (strain 168), this protein is Penicillin-binding protein 1F (pbpF).